The sequence spans 183 residues: RSCEICHNVGNDCDYDYVQECDSPEDQCGTVMLEGSLAPFSVRTIHRNCFSSSLCKLEHFDVNTGNGAYLRGRIHCCDQQKCEGRPFPGLPLSYPNGYVCPGVLRGLFSDSSESEAACKGDETKCITIVGYRKERFLGDIAYNIKGCVSSCPELILSNRTHEERRNELIKVECRDAAKTTPSE.

8 disulfide bridges follow: Cys3–Cys28, Cys6–Cys13, Cys21–Cys49, Cys55–Cys76, Cys77–Cys82, Cys100–Cys125, Cys118–Cys147, and Cys151–Cys173. N-linked (GlcNAc...) asparagine glycosylation occurs at Asn158.

Belongs to the CNF-like-inhibitor family. In terms of assembly, heterodimer of subunit A and subunit B. In terms of tissue distribution, expressed by the liver.

It localises to the secreted. Functionally, phospholipase A2 (PA2) inhibitor. Inhibits the enzymatic activity of PA2 of Deinagkistrodon acutus. Also shows a wide anti-hemorrhage activities to D.acutus, Naja atra and Agkistrodon halys venom. The native protein is more potent than the recombinant one. The protein is Phospholipase A2 inhibitor gamma subunit A1 of Trimerodytes annularis (Red-bellied annulate keelback).